A 208-amino-acid polypeptide reads, in one-letter code: dITP/XTP pyrophosphatase (208 aa).

15 to 20 lines the substrate pocket; sequence SHNAGK. 2 residues coordinate Mg(2+): Glu47 and Asp76. The active-site Proton acceptor is Asp76. Substrate is bound by residues Ser77, 157–160, Lys180, and 185–186; these read HGYD and HR.

Belongs to the HAM1 NTPase family. As to quaternary structure, homodimer. Mg(2+) serves as cofactor.

The enzyme catalyses XTP + H2O = XMP + diphosphate + H(+). The catalysed reaction is dITP + H2O = dIMP + diphosphate + H(+). It carries out the reaction ITP + H2O = IMP + diphosphate + H(+). Pyrophosphatase that catalyzes the hydrolysis of nucleoside triphosphates to their monophosphate derivatives, with a high preference for the non-canonical purine nucleotides XTP (xanthosine triphosphate), dITP (deoxyinosine triphosphate) and ITP. Seems to function as a house-cleaning enzyme that removes non-canonical purine nucleotides from the nucleotide pool, thus preventing their incorporation into DNA/RNA and avoiding chromosomal lesions. The protein is dITP/XTP pyrophosphatase of Gluconobacter oxydans (strain 621H) (Gluconobacter suboxydans).